A 380-amino-acid polypeptide reads, in one-letter code: Succinyl-diaminopimelate desuccinylase (380 aa).

His66 is a binding site for Zn(2+). The active site involves Asp68. Residue Asp99 participates in Zn(2+) binding. The active-site Proton acceptor is the Glu135. 3 residues coordinate Zn(2+): Glu136, Glu164, and His350.

The protein belongs to the peptidase M20A family. DapE subfamily. In terms of assembly, homodimer. Zn(2+) is required as a cofactor. Co(2+) serves as cofactor.

It carries out the reaction N-succinyl-(2S,6S)-2,6-diaminopimelate + H2O = (2S,6S)-2,6-diaminopimelate + succinate. It participates in amino-acid biosynthesis; L-lysine biosynthesis via DAP pathway; LL-2,6-diaminopimelate from (S)-tetrahydrodipicolinate (succinylase route): step 3/3. Its function is as follows. Catalyzes the hydrolysis of N-succinyl-L,L-diaminopimelic acid (SDAP), forming succinate and LL-2,6-diaminopimelate (DAP), an intermediate involved in the bacterial biosynthesis of lysine and meso-diaminopimelic acid, an essential component of bacterial cell walls. In Magnetococcus marinus (strain ATCC BAA-1437 / JCM 17883 / MC-1), this protein is Succinyl-diaminopimelate desuccinylase.